We begin with the raw amino-acid sequence, 73 residues long: UPF0154 protein LJ_1506 (73 aa).

A helical membrane pass occupies residues 3–23 (LGLAIFLIIIALLIGLVGGFY).

It belongs to the UPF0154 family.

The protein resides in the cell membrane. In Lactobacillus johnsonii (strain CNCM I-12250 / La1 / NCC 533), this protein is UPF0154 protein LJ_1506.